A 343-amino-acid polypeptide reads, in one-letter code: Allantoicase (343 aa).

The protein belongs to the allantoicase family.

The enzyme catalyses allantoate + H2O = (S)-ureidoglycolate + urea. It participates in nitrogen metabolism; (S)-allantoin degradation; (S)-ureidoglycolate from allantoate (aminidohydrolase route): step 1/1. Utilization of purines as secondary nitrogen sources, when primary sources are limiting. The polypeptide is Allantoicase (DAL2) (Saccharomyces cerevisiae (strain ATCC 204508 / S288c) (Baker's yeast)).